The chain runs to 496 residues: Glutamate--tRNA ligase (496 aa).

A 'HIGH' region motif is present at residues 11–21; that stretch reads PSPTGLLHIGN. Positions 255–259 match the 'KMSKS' region motif; it reads KLSKR. An ATP-binding site is contributed by K258.

Belongs to the class-I aminoacyl-tRNA synthetase family. Glutamate--tRNA ligase type 1 subfamily. As to quaternary structure, monomer.

It is found in the cytoplasm. The catalysed reaction is tRNA(Glu) + L-glutamate + ATP = L-glutamyl-tRNA(Glu) + AMP + diphosphate. In terms of biological role, catalyzes the attachment of glutamate to tRNA(Glu) in a two-step reaction: glutamate is first activated by ATP to form Glu-AMP and then transferred to the acceptor end of tRNA(Glu). In Streptococcus pyogenes serotype M49 (strain NZ131), this protein is Glutamate--tRNA ligase.